A 277-amino-acid polypeptide reads, in one-letter code: Basic leucine zipper 9 (277 aa).

Positions 73 to 141 are disordered; that stretch reads ADSPVSANKP…ESAKRSRRRK (69 aa). Serine 100 carries the post-translational modification Phosphoserine. Over residues 109–118 the composition is skewed to polar residues; that stretch reads AGQSEMTNDP. The 64-residue stretch at 120 to 183 folds into the bZIP domain; the sequence is DLKRIRRMNS…RSAGTNNRVL (64 aa). Residues 122–141 form a basic motif region; sequence KRIRRMNSNRESAKRSRRRK. The Nuclear localization signal signature appears at 124-131; sequence IRRMNSNR. Residues 148–162 are leucine-zipper; that stretch reads LETQVDSLKGDNSTL.

This sequence belongs to the bZIP family. In terms of assembly, homodimer. Interacts with BZIP1, BZIP2, BZIP10, BZIP11, BZIP25, BZIP44, BZIP53 and BZIP63. Phosphorylated. Expressed in roots, shoots, stems, young leaves, and flowers, mostly in vascular tissues (e.g. phloem).

It localises to the nucleus. In terms of biological role, transcription factor. This chain is Basic leucine zipper 9 (BZIP9), found in Arabidopsis thaliana (Mouse-ear cress).